Consider the following 364-residue polypeptide: Valine dehydrogenase (364 aa).

Residue Lys-91 is part of the active site. An NAD(+)-binding site is contributed by 191 to 197; sequence GVGKVGH.

It belongs to the Glu/Leu/Phe/Val dehydrogenases family. In terms of assembly, homodimer.

The protein resides in the cytoplasm. It catalyses the reaction L-valine + NAD(+) + H2O = 3-methyl-2-oxobutanoate + NH4(+) + NADH + H(+). The protein operates within amino-acid degradation; L-valine degradation. Its activity is regulated as follows. Inhibited by pyridoxal 5'-phosphate (PLP). Functionally, oxidative deamination of branched-chain amino acids. Oxidizes L-valine and L-alpha-aminobutyric acid efficiently, and L-alanine and L-isoleucine less efficiently. D-valine and L-glutamate were not substrates for the enzyme. The catabolism of valine is the major source of fatty acid precursors for macrolide biosynthesis and a vital source of antibiotic precursors. In Streptomyces albus (strain ATCC 21838 / DSM 41398 / FERM P-419 / JCM 4703 / NBRC 107858), this protein is Valine dehydrogenase.